Consider the following 225-residue polypeptide: DNA repair and recombination protein RadB (225 aa).

This sequence belongs to the eukaryotic RecA-like protein family. RadB subfamily.

Functionally, involved in DNA repair and in homologous recombination. May regulate the cleavage reactions of the branch-structured DNA. Has a very weak ATPase activity that is not stimulated by DNA. Binds DNA but does not promote DNA strands exchange. In Methanococcoides burtonii (strain DSM 6242 / NBRC 107633 / OCM 468 / ACE-M), this protein is DNA repair and recombination protein RadB.